Reading from the N-terminus, the 222-residue chain is WAP four-disulfide core domain protein 1 (222 aa).

A signal peptide spans 1 to 32; it reads MDSRMLSDQRFCRRIFAAALCVLVLLADSGCA. Residues 61–110 form the WAP domain; sequence HYQKNDRCPPPPQTLPDRACEVPSCRSDSECERHKRCCYNGCIYACLESV. 4 disulfides stabilise this stretch: C68–C98, C80–C102, C85–C97, and C91–C106.

It localises to the secreted. Has growth inhibitory activity. This Gallus gallus (Chicken) protein is WAP four-disulfide core domain protein 1 (WFDC1).